Reading from the N-terminus, the 347-residue chain is Protein RecA (347 aa).

Position 67–74 (67–74 (GPESSGKT)) interacts with ATP.

The protein belongs to the RecA family.

Its subcellular location is the cytoplasm. Its function is as follows. Can catalyze the hydrolysis of ATP in the presence of single-stranded DNA, the ATP-dependent uptake of single-stranded DNA by duplex DNA, and the ATP-dependent hybridization of homologous single-stranded DNAs. It interacts with LexA causing its activation and leading to its autocatalytic cleavage. In Sulfurovum sp. (strain NBC37-1), this protein is Protein RecA.